Here is a 280-residue protein sequence, read N- to C-terminus: Clathrin adapter accessory protein LAA2 (280 aa).

The disordered stretch occupies residues 1-26 (MSDRDQIEPVTNALDAESDSSDDFGN). An Ear-binding motif motif is present at residues 19–30 (DSSDDFGNFSDA).

In terms of assembly, interacts with the clathrin-associated adapter complex AP-1. Interacts with LAA1.

It is found in the cytoplasmic vesicle. It localises to the clathrin-coated vesicle. In terms of biological role, involved in localization of clathrin-associated adapter complex (AP-1) and subsequent AP-1-mediated clathrin-coated vesicle cargo loading. Directly mediates the interaction between LAA1 and AP-1 which is required for AP-1 localization. In complex with LAA1, cooperates with the small GTPase ARF1 and the phosphatidyl-inositol-4-phosphate (PI4P) synthesis to confer temporal specificity to AP-1 recruitment. This chain is Clathrin adapter accessory protein LAA2, found in Saccharomyces cerevisiae (strain ATCC 204508 / S288c) (Baker's yeast).